Consider the following 585-residue polypeptide: Tyramine beta-hydroxylase (585 aa).

An N-terminal signal peptide occupies residues 1 to 21 (MKCANAAALLFFVLCDIGVHG). Residues 31 to 142 (SNVTVKWQTD…GTTQFYIAAS (112 aa)) enclose the DOMON domain. N-linked (GlcNAc...) asparagine glycans are attached at residues N32 and N71. Residue Y206 is part of the active site. Cystine bridges form between C208–C258 and C247–C270. Cu(2+) is bound by residues H240 and H241. Cu(2+) contacts are provided by H308, H386, and H388. 3 disulfide bridges follow: C365/C477, C369/C534, and C440/C462. H386 is a catalytic residue. N449 is a glycosylation site (N-linked (GlcNAc...) asparagine). M461 contributes to the Cu(2+) binding site. N483 carries an N-linked (GlcNAc...) asparagine glycan.

The protein belongs to the copper type II ascorbate-dependent monooxygenase family. Requires Cu(2+) as cofactor.

The protein localises to the cytoplasmic vesicle. It localises to the secretory vesicle. The protein resides in the synaptic vesicle. It catalyses the reaction tyramine + L-ascorbate + O2 = (R)-octopamine + L-dehydroascorbate + H2O. Functionally, catalyzes the hydroxylation of tyramine into octopamine, a neurotransmitter involved in pharyngeal pumping and egg laying. The chain is Tyramine beta-hydroxylase (tbh-1) from Caenorhabditis briggsae.